A 517-amino-acid polypeptide reads, in one-letter code: Maturase K (517 aa).

Belongs to the intron maturase 2 family. MatK subfamily.

The protein resides in the plastid. Its subcellular location is the chloroplast. Its function is as follows. Usually encoded in the trnK tRNA gene intron. Probably assists in splicing its own and other chloroplast group II introns. In Juncus effusus (Soft rush), this protein is Maturase K.